A 790-amino-acid polypeptide reads, in one-letter code: AMP deaminase (790 aa).

Residues 1–14 (MSTPLRGSSPQVSF) show a composition bias toward polar residues. The interval 1–26 (MSTPLRGSSPQVSFYESELDQEGGSD) is disordered. H221 and H223 together coordinate Zn(2+). Residues H223 and 292–297 (KFNLKY) contribute to the substrate site. Residue H488 participates in Zn(2+) binding. Position 491 (E491) interacts with substrate. H510 functions as the Proton acceptor in the catalytic mechanism. Position 565 (D565) interacts with Zn(2+). 566–569 (DPLQ) contributes to the substrate binding site. Disordered stretches follow at residues 698–726 (NKLR…SSPG) and 739–790 (PPPL…KSDK). Composition is skewed to low complexity over residues 706–726 (GSTP…SSPG) and 750–781 (NNNN…TTTN).

The protein belongs to the metallo-dependent hydrolases superfamily. Adenosine and AMP deaminases family. As to quaternary structure, homodimer. Zn(2+) serves as cofactor.

The protein localises to the cytoplasm. The enzyme catalyses AMP + H2O + H(+) = IMP + NH4(+). The protein operates within purine metabolism; IMP biosynthesis via salvage pathway; IMP from AMP: step 1/1. With respect to regulation, activated by ATP, inhibited by GTP, EDTA and inorganic phosphate. Its function is as follows. Catalyzes the conversion of adenosine monophosphate (AMP) to inosine monophosphate (IMP) and ammonia (NH4(+)). Participates in the regulation of the adenylated nucleotide pool and the interconversion to guanylated nucleotides during early morphodifferentiation. This chain is AMP deaminase (amdA), found in Dictyostelium discoideum (Social amoeba).